The primary structure comprises 976 residues: Vacuolar membrane protease (976 aa).

Over 1–51 the chain is Cytoplasmic; it reads MPLSTGLTLSSLNVMEKADNHYNMMTKQPPALSPVDMVSSRRGFNPIAFTP. A helical transmembrane segment spans residues 52–72; that stretch reads WPVTILSSLVYLAFIIPIIVV. Topologically, residues 73-399 are vacuolar; sequence HHLVPPAPKE…DNGNDGKLNN (327 aa). N147 and N150 each carry an N-linked (GlcNAc...) asparagine glycan. 2 residues coordinate Zn(2+): H206 and D218. E252 functions as the Proton acceptor in the catalytic mechanism. Residues E253, E278, and H351 each contribute to the Zn(2+) site. A helical transmembrane segment spans residues 400–420; that stretch reads GAGTLGVWFDFYGSSFAVFEL. The Cytoplasmic portion of the chain corresponds to 421–427; it reads NTLFGHS. Residues 428–448 traverse the membrane as a helical segment; that stretch reads VALLVVAPLLLIATCVTLYTL. Residues 449–477 lie on the Vacuolar side of the membrane; it reads DKMYMFSMYTYLSESGGQVSLYGLRGLFR. The helical transmembrane segment at 478-498 threads the bilayer; sequence FPLILGISTALTIGLAFLLMK. Residues 499–519 lie on the Cytoplasmic side of the membrane; it reads ANPFIIYSSPYAVWNPSALHR. Residues 520–540 traverse the membrane as a helical segment; that stretch reads AYAFTWMFGMMWVLLVIATVY. Over 541–550 the chain is Vacuolar; the sequence is QKQHGIASSY. Residues 551–571 traverse the membrane as a helical segment; it reads FIVFYFAGVSIATWISYLELF. At 572–675 the chain is on the cytoplasmic side; it reads GLPTTQDYAR…HRLEQRWSIN (104 aa). The disordered stretch occupies residues 590 to 633; sequence TPSSDSRLLAPSADELPPSGSAAGHDFNPEDVEDEEPTESTSLL. Positions 618–627 are enriched in acidic residues; it reads PEDVEDEEPT. Residues 676–696 traverse the membrane as a helical segment; the sequence is LISSAWILQFLFVAPIVIILL. Topologically, residues 697 to 718 are vacuolar; the sequence is GQLGLFLTSATYQIGADGGSQL. Residues 719–739 form a helical membrane-spanning segment; sequence VIYVGIAVLSVLILLPLFPFI. Residues 740–745 lie on the Cytoplasmic side of the membrane; the sequence is HRFTYH. Residues 746-766 traverse the membrane as a helical segment; that stretch reads IPTFLLFVLIGTLVYNLTAFP. Residues 767–976 lie on the Vacuolar side of the membrane; it reads FSHSNRLKVA…LVEGSHSFKL (210 aa). N848 carries N-linked (GlcNAc...) asparagine glycosylation.

It belongs to the peptidase M28 family. Requires Zn(2+) as cofactor.

Its subcellular location is the vacuole membrane. May be involved in vacuolar sorting and osmoregulation. This chain is Vacuolar membrane protease, found in Arthroderma otae (strain ATCC MYA-4605 / CBS 113480) (Microsporum canis).